Consider the following 908-residue polypeptide: Glutamate receptor ionotropic, kainate 2 (908 aa).

A signal peptide spans 1–31 (MKIISPVLSNLVFSRSIKVLLCLLWIGYSQG). At 32-561 (TTHVLRFGGI…VFSFLNPLSP (530 aa)) the chain is on the extracellular side. Residues N67, N73, N275, N378, N412, N423, and N430 are each glycosylated (N-linked (GlcNAc...) asparagine). C96 and C347 form a disulfide bridge. Positions 516, 518, and 523 each coordinate L-glutamate. An N-linked (GlcNAc...) asparagine glycan is attached at N546. A helical membrane pass occupies residues 562-582 (DIWMYILLAYLGVSCVLFVIA). Topologically, residues 583–638 (RFSPYEWYNPHPCNPDSDVVENNFTLLNSFWFGVGALMQQGSELMPKALSTRIVGG) are cytoplasmic. Residues 639-659 (IWWFFTLIIISSYTANLAAFL) form a helical membrane-spanning segment. Over 660–819 (TVERMESPID…KEASALGVQN (160 aa)) the chain is Extracellular. Residues A689, T690, and E738 each coordinate L-glutamate. C750 and C804 are joined by a disulfide. N751 is a glycosylation site (N-linked (GlcNAc...) asparagine). The helical transmembrane segment at 820–840 (IGGIFIVLAAGLVLSVFVAVG) threads the bilayer. The Cytoplasmic portion of the chain corresponds to 841–908 (EFLYKSKKNA…RRLPGKETMA (68 aa)). 2 positions are modified to phosphoserine; by PKC: S846 and S868. A Glycyl lysine isopeptide (Lys-Gly) (interchain with G-Cter in SUMO1) cross-link involves residue K886.

Belongs to the glutamate-gated ion channel (TC 1.A.10.1) family. GRIK2 subfamily. Homotetramer and heterotetramer with GRIK5. Tetramers may be formed by the dimerization of dimers. Assembles into a kainate-gated homomeric channel that does not bind AMPA. Can form functional heteromeric receptors with GRIK3. Forms a heteromeric complex with GRIK4 and GRIK5. Interacts with DLG4. Interacts (via C-terminus) with KLHL17 (via kelch repeats); the interaction targets GRIK2 for degradation via ubiquitin-proteasome pathway. Interacts with NETO2. In terms of processing, sumoylation mediates kainate receptor-mediated endocytosis and regulates synaptic transmission. Sumoylation is enhanced by PIAS3 and desumoylated by SENP1. Ubiquitinated. Ubiquitination regulates the GRIK2 levels at the synapse by leading kainate receptor degradation through proteasome. Post-translationally, phosphorylated by PKC at Ser-868 upon agonist activation, this directly enhance sumoylation. As to expression, expressed in the hippocampal mossy fiber synapses (at protein level). Most abundant in the cerebellum and the hypothalamus. Expressed in a proportion of dorsal root ganglion (DRG) neurons (13.6%); predominantly small diameter DRG neurons (75%) with the remainder expressed in medium diameter DRG neurons.

Its subcellular location is the cell membrane. The protein resides in the postsynaptic cell membrane. The catalysed reaction is Ca(2+)(in) = Ca(2+)(out). It carries out the reaction Na(+)(in) = Na(+)(out). With respect to regulation, cold receptor activity activated by temperatures between 10-19 degrees Celsius. Its function is as follows. Ionotropic glutamate receptor that functions as a cation-permeable ligand-gated ion channel, gated by L-glutamate and the glutamatergic agonist kainic acid. L-glutamate acts as an excitatory neurotransmitter at many synapses in the central nervous system. Binding of the excitatory neurotransmitter L-glutamate induces a conformation change, leading to the opening of the cation channel, and thereby converts the chemical signal to an electrical impulse. The receptor then desensitizes rapidly and enters a transient inactive state, characterized by the presence of bound agonist. Modulates cell surface expression of NETO2. In association with GRIK3, involved in presynaptic facilitation of glutamate release at hippocampal mossy fiber synapses. Independent of its ionotropic glutamate receptor activity, acts as a thermoreceptor conferring sensitivity to cold temperatures. Functions in dorsal root ganglion neurons. Functionally, ionotropic glutamate receptor that functions as a cation-permeable ligand-gated ion channel, gated by L-glutamate and the glutamatergic agonist kainic acid. The chain is Glutamate receptor ionotropic, kainate 2 (Grik2) from Mus musculus (Mouse).